We begin with the raw amino-acid sequence, 570 residues long: MNTQILILATSAFFYVRADKICLGHHAVSNGTKVDTLTEKGIEVVNATETVEQTNIPKICSKGKQTVDLGQCGLLGTVIGPPQCDQFLEFSANLIVERREGNDICYPGKFDNEETLRQILRKSGGIKKENMGFTYTGVRTNGETSACRRSRSSFYAEMKWLLSSTDNGIFPQMTKSYKNTKKVPALITWGIHHSGSTTEQTRLYGSGNKLITVWSSKYQQSFVPNPGPRPQINGQSGRIDFHWLMLDPNDTVTFSFNGAFIAPDRASFLRGKSLGIQSDAQLDNNCEGECYHIGGTIISNLPFQNINSRTIGKCPRYVKQKSLMLATGMKNVPEAPAHKQLTHHMRKKRGLFGAIAGFIENGWEGLIDGWYGYKHQNAQGEGTAADYKSTQSAINQITGKLNRLIEKTNQQFELIDNEFNEIEKQIGNVINWTRDSIIEVWSYNAEFLVAVENQHTIDLTDSEMNKLYEKVRRQLRENAEEDGNGCFEIFHQCDNDCMASIRNNTYDHKKYRKEAIQNRIQIDAVKLSSGYKDIILWFSFGASCFLFLAIAMGLVFICIKNGNMRCTICI.

Positions M1–A18 are cleaved as a signal peptide. Topologically, residues D19–D533 are extracellular. Cystine bridges form between C22-C486, C60-C286, C72-C84, C105-C147, C290-C314, and C493-C497. N30 and N46 each carry an N-linked (GlcNAc...) asparagine; by host glycan. N-linked (GlcNAc...) asparagine; by host glycosylation occurs at N249. N-linked (GlcNAc...) asparagine; by host glycosylation occurs at N431. N503 carries N-linked (GlcNAc...) asparagine; by host glycosylation. A helical membrane pass occupies residues I534–L554. Residues V555–I570 are Cytoplasmic-facing. Residues C566 and C569 are each lipidated (S-palmitoyl cysteine; by host).

The protein belongs to the influenza viruses hemagglutinin family. Homotrimer of disulfide-linked HA1-HA2. In terms of processing, palmitoylated. In natural infection, inactive HA is matured into HA1 and HA2 outside the cell by one or more trypsin-like, arginine-specific endoprotease secreted by the bronchial epithelial cells. One identified protease that may be involved in this process is secreted in lungs by club cells.

Its subcellular location is the virion membrane. The protein resides in the host apical cell membrane. Binds to sialic acid-containing receptors on the cell surface, bringing about the attachment of the virus particle to the cell. This attachment induces virion internalization of about two third of the virus particles through clathrin-dependent endocytosis and about one third through a clathrin- and caveolin-independent pathway. Plays a major role in the determination of host range restriction and virulence. Class I viral fusion protein. Responsible for penetration of the virus into the cell cytoplasm by mediating the fusion of the membrane of the endocytosed virus particle with the endosomal membrane. Low pH in endosomes induces an irreversible conformational change in HA2, releasing the fusion hydrophobic peptide. Several trimers are required to form a competent fusion pore. Functionally, binds to sialic acid-containing receptors on the cell surface, bringing about the attachment of the virus particle to the cell. This attachment induces virion internalization either through clathrin-dependent endocytosis or through clathrin- and caveolin-independent pathway. Plays a major role in the determination of host range restriction and virulence. Class I viral fusion protein. Responsible for penetration of the virus into the cell cytoplasm by mediating the fusion of the membrane of the endocytosed virus particle with the endosomal membrane. Low pH in endosomes induces an irreversible conformational change in HA2, releasing the fusion hydrophobic peptide. Several trimers are required to form a competent fusion pore. The polypeptide is Hemagglutinin (Influenza A virus (strain A/Equine/Cambridge/1/1963 H7N7)).